Consider the following 661-residue polypeptide: Kyphoscoliosis peptidase (661 aa).

The segment covering 28–41 (GTLSDQQANPSSLL) has biased composition (polar residues). 2 disordered regions span residues 28 to 47 (GTLS…GGGF) and 115 to 136 (QGDK…HAYP). Catalysis depends on residues C225, H267, and D282.

Belongs to the transglutaminase-like superfamily. Interacts with IGFN1 and FLNC. As to expression, highly expressed in skeletal muscle.

It localises to the cytoplasm. The protein resides in the cytoskeleton. Its subcellular location is the myofibril. It is found in the sarcomere. The protein localises to the z line. Its function is as follows. Probable cytoskeleton-associated protease required for normal muscle growth. Involved in function, maturation and stabilization of the neuromuscular junction. May act by cleaving muscle-specific proteins such as FLNC. This is Kyphoscoliosis peptidase from Homo sapiens (Human).